The chain runs to 95 residues: L-amino-acid oxidase (95 aa).

It belongs to the flavin monoamine oxidase family. FIG1 subfamily. Homodimer; non-covalently linked. FAD serves as cofactor. In terms of processing, N-glycosylated. In terms of tissue distribution, expressed by the venom gland.

It is found in the secreted. The catalysed reaction is an L-alpha-amino acid + O2 + H2O = a 2-oxocarboxylate + H2O2 + NH4(+). The enzyme catalyses L-leucine + O2 + H2O = 4-methyl-2-oxopentanoate + H2O2 + NH4(+). It carries out the reaction L-phenylalanine + O2 + H2O = 3-phenylpyruvate + H2O2 + NH4(+). It catalyses the reaction L-tryptophan + O2 + H2O = indole-3-pyruvate + H2O2 + NH4(+). The catalysed reaction is L-methionine + O2 + H2O = 4-methylsulfanyl-2-oxobutanoate + H2O2 + NH4(+). The enzyme catalyses L-arginine + O2 + H2O = 5-guanidino-2-oxopentanoate + H2O2 + NH4(+). Functionally, catalyzes an oxidative deamination of predominantly hydrophobic and aromatic L-amino acids, thus producing hydrogen peroxide that may contribute to the diverse toxic effects of this enzyme. Is highly active on L-Met, L-Leu, L-Phe, L-Trp, and L-Arg, and no weakly or no active on L-His, L-Tyr, L-Ile, L-Gln, and L-Lys. Exhibits diverse biological activities, such as antibacterial activity against both Gram-positive (B.subtilis) and Gram-negative (E.coli) bacteria, and inhibition of ADP- or collagen-induced platelet aggregation. Effects of snake L-amino oxidases on platelets are controversial, since they either induce aggregation or inhibit agonist-induced aggregation. These different effects are probably due to different experimental conditions. This protein may also induce hemorrhage, hemolysis, edema, apoptosis, and have antiparasitic activities. This Naja oxiana (Central Asian cobra) protein is L-amino-acid oxidase.